Reading from the N-terminus, the 162-residue chain is Small ribosomal subunit protein uS7m (162 aa).

The protein belongs to the universal ribosomal protein uS7 family. Part of the small ribosomal subunit.

The protein resides in the mitochondrion. Its function is as follows. One of the primary rRNA binding proteins, it binds directly to 16S-like rRNA where it nucleates assembly of the head domain of the small subunit. This chain is Small ribosomal subunit protein uS7m (mrps7), found in Dictyostelium discoideum (Social amoeba).